A 182-amino-acid polypeptide reads, in one-letter code: Large ribosomal subunit protein bL17 (182 aa).

The interval 126–182 is disordered; it reads ERANRVAASKAKKAEAEAAEAKAEEAEEAPEVEADTATDKAAEAEAAEAADEAAEDK. Positions 137-149 are enriched in basic and acidic residues; that stretch reads KKAEAEAAEAKAE. 2 stretches are compositionally biased toward acidic residues: residues 150 to 161 and 170 to 182; these read EAEEAPEVEADT and EAAE…AEDK.

It belongs to the bacterial ribosomal protein bL17 family. Part of the 50S ribosomal subunit. Contacts protein L32.

The protein is Large ribosomal subunit protein bL17 of Corynebacterium jeikeium (strain K411).